Reading from the N-terminus, the 227-residue chain is Uracil-DNA glycosylase (227 aa).

Catalysis depends on Asp64, which acts as the Proton acceptor.

Belongs to the uracil-DNA glycosylase (UDG) superfamily. UNG family.

The protein resides in the cytoplasm. The enzyme catalyses Hydrolyzes single-stranded DNA or mismatched double-stranded DNA and polynucleotides, releasing free uracil.. Excises uracil residues from the DNA which can arise as a result of misincorporation of dUMP residues by DNA polymerase or due to deamination of cytosine. This is Uracil-DNA glycosylase from Alkaliphilus metalliredigens (strain QYMF).